Reading from the N-terminus, the 250-residue chain is MSTSPLSPVASSRADAALVLFSGGQDSSVCLAWALERYARVETVGFDYGQRHHIEMEARVAVRHQVAERFPHWARRLGEDHVLDLTGFGAVAHSALTADVAIEMTERGLPSTFVPGRNLVFLIYAAALADRRGLGALVGGMCETDFSGYPDCRRDTLDAMQSALNLGMDRDFVIETPLMKLTKAQTWALAKSLGGEDLVDLIVVESHTCYQGERGDLHPWGHGCGECPACELRRRGYEEWDAAGREALGA.

Position 21–31 (21–31 (FSGGQDSSVCL)) interacts with ATP. The Zn(2+) site is built by Cys209, Cys224, Cys227, and Cys230.

This sequence belongs to the QueC family. Zn(2+) is required as a cofactor.

The enzyme catalyses 7-carboxy-7-deazaguanine + NH4(+) + ATP = 7-cyano-7-deazaguanine + ADP + phosphate + H2O + H(+). Its pathway is purine metabolism; 7-cyano-7-deazaguanine biosynthesis. Functionally, catalyzes the ATP-dependent conversion of 7-carboxy-7-deazaguanine (CDG) to 7-cyano-7-deazaguanine (preQ(0)). The sequence is that of 7-cyano-7-deazaguanine synthase from Caulobacter sp. (strain K31).